A 399-amino-acid chain; its full sequence is Insertion element IS116 uncharacterized 44.8 kDa protein (399 aa).

The protein belongs to the transposase IS1111A/IS1328/IS1533 family.

This Streptomyces clavuligerus protein is Insertion element IS116 uncharacterized 44.8 kDa protein.